Consider the following 157-residue polypeptide: Transcription elongation factor GreA (157 aa).

Residues 14–37 (LRKELERLLKRRPLITEAIAEARE) are a coiled coil.

The protein belongs to the GreA/GreB family.

In terms of biological role, necessary for efficient RNA polymerase transcription elongation past template-encoded arresting sites. The arresting sites in DNA have the property of trapping a certain fraction of elongating RNA polymerases that pass through, resulting in locked ternary complexes. Cleavage of the nascent transcript by cleavage factors such as GreA or GreB allows the resumption of elongation from the new 3'terminus. GreA releases sequences of 2 to 3 nucleotides. This is Transcription elongation factor GreA from Vibrio vulnificus (strain CMCP6).